Consider the following 555-residue polypeptide: Glucose-6-phosphate isomerase (555 aa).

The active-site Proton donor is Glu-365. Residues His-396 and Lys-522 contribute to the active site.

It belongs to the GPI family.

Its subcellular location is the cytoplasm. The catalysed reaction is alpha-D-glucose 6-phosphate = beta-D-fructose 6-phosphate. Its pathway is carbohydrate biosynthesis; gluconeogenesis. It functions in the pathway carbohydrate degradation; glycolysis; D-glyceraldehyde 3-phosphate and glycerone phosphate from D-glucose: step 2/4. Catalyzes the reversible isomerization of glucose-6-phosphate to fructose-6-phosphate. The protein is Glucose-6-phosphate isomerase of Psychrobacter cryohalolentis (strain ATCC BAA-1226 / DSM 17306 / VKM B-2378 / K5).